A 285-amino-acid chain; its full sequence is GPN-loop GTPase 3 (285 aa).

13–18 (GSGKST) is a binding site for GTP. Positions 72–74 (GPN) match the Gly-Pro-Asn (GPN)-loop; involved in dimer interface motif. 174–177 (TKMD) provides a ligand contact to GTP. A disordered region spans residues 261-285 (KEPKENEEDKSENFDEFFQDRADEP). A compositionally biased stretch (acidic residues) spans 265–277 (ENEEDKSENFDEF).

This sequence belongs to the GPN-loop GTPase family. In terms of assembly, heterodimer with gpn1. Binds to RNA polymerase II (RNAPII).

In terms of biological role, small GTPase required for proper localization of RNA polymerase II (RNAPII). May act at an RNAP assembly step prior to nuclear import. This is GPN-loop GTPase 3 from Xenopus tropicalis (Western clawed frog).